The following is a 722-amino-acid chain: Peroxisomal bifunctional enzyme (722 aa).

The segment at 1 to 281 (MAEYLRLPHS…FAEKSANKWS (281 aa)) is enoyl-CoA hydratase / isomerase. Ala2 carries the post-translational modification Blocked amino end (Ala). Position 38 is an N6-succinyllysine (Lys38). Position 100 (Gly100) interacts with substrate. Lys173 carries the N6-acetyllysine; alternate modification. Lys173 is subject to N6-succinyllysine; alternate. At Lys182 the chain carries N6-succinyllysine. N6-acetyllysine; alternate occurs at positions 190 and 218. N6-succinyllysine; alternate occurs at positions 190 and 218. Lys241 bears the N6-succinyllysine mark. Lys249 is modified (N6-acetyllysine). At Lys253 the chain carries N6-succinyllysine. Position 275 is an N6-acetyllysine; alternate (Lys275). An N6-succinyllysine; alternate modification is found at Lys275. Residues Lys279, Lys289, and Lys330 each carry the N6-succinyllysine modification. The 3-hydroxyacyl-CoA dehydrogenase stretch occupies residues 282-571 (TPSGASWKTA…DMLCEAGRFG (290 aa)). Residues Lys345, Lys359, and Lys463 each carry the N6-acetyllysine modification. At Lys531 the chain carries N6-succinyllysine. Thr547 carries the post-translational modification Phosphothreonine. Position 576 is an N6-succinyllysine (Lys576). N6-acetyllysine; alternate is present on residues Lys583, Lys590, and Lys709. N6-succinyllysine; alternate occurs at positions 583, 590, and 709. The short motif at 720–722 (SKL) is the Microbody targeting signal element. Lys721 carries the post-translational modification N6-succinyllysine.

The protein in the N-terminal section; belongs to the enoyl-CoA hydratase/isomerase family. In the C-terminal section; belongs to the 3-hydroxyacyl-CoA dehydrogenase family. In terms of assembly, monomer. In terms of processing, acetylated, leading to enhanced enzyme activity. Acetylation is enhanced by up to 80% after treatment either with trichostin A (TCA) or with nicotinamide (NAM) with highest increase on Lys-345. Acetylation and enzyme activity increased by about 1.5% on addition of fatty acids.

It localises to the peroxisome. The catalysed reaction is a (3S)-3-hydroxyacyl-CoA = a (2E)-enoyl-CoA + H2O. The enzyme catalyses a 4-saturated-(3S)-3-hydroxyacyl-CoA = a (3E)-enoyl-CoA + H2O. It carries out the reaction a (3Z)-enoyl-CoA = a 4-saturated (2E)-enoyl-CoA. It catalyses the reaction a (3E)-enoyl-CoA = a 4-saturated (2E)-enoyl-CoA. The catalysed reaction is a (3S)-3-hydroxyacyl-CoA + NAD(+) = a 3-oxoacyl-CoA + NADH + H(+). The enzyme catalyses (2S,3S)-3-hydroxy-2-methylbutanoyl-CoA = (2E)-2-methylbut-2-enoyl-CoA + H2O. It carries out the reaction (3E,5Z)-tetradecadienoyl-CoA = (2E,5Z)-tetradecadienoyl-CoA. It catalyses the reaction (3E,5Z)-octadienoyl-CoA = (2E,5Z)-octadienoyl-CoA. The catalysed reaction is (3S)-hydroxydecanoyl-CoA + NAD(+) = 3-oxodecanoyl-CoA + NADH + H(+). The enzyme catalyses (3E)-decenoyl-CoA = (2E)-decenoyl-CoA. It carries out the reaction (3Z)-hexenoyl-CoA = (2E)-hexenoyl-CoA. It catalyses the reaction (3E)-hexenoyl-CoA = (2E)-hexenoyl-CoA. The catalysed reaction is (3S)-hydroxydecanoyl-CoA = (2E)-decenoyl-CoA + H2O. The enzyme catalyses (3S)-hydroxyhexanoyl-CoA = (2E)-hexenoyl-CoA + H2O. It carries out the reaction (3S)-hydroxyhexadecanoyl-CoA + NAD(+) = 3-oxohexadecanoyl-CoA + NADH + H(+). It catalyses the reaction (3S)-hydroxyhexadecanoyl-CoA = (2E)-hexadecenoyl-CoA + H2O. The catalysed reaction is (2E)-hexadecenedioyl-CoA + H2O = (3S)-hydroxyhexadecanedioyl-CoA. The enzyme catalyses (3S)-hydroxyhexadecanedioyl-CoA + NAD(+) = 3-oxohexadecanedioyl-CoA + NADH + H(+). It participates in lipid metabolism; fatty acid beta-oxidation. Enzyme activity enhanced by acetylation. Functionally, peroxisomal trifunctional enzyme possessing 2-enoyl-CoA hydratase, 3-hydroxyacyl-CoA dehydrogenase, and delta 3, delta 2-enoyl-CoA isomerase activities. Catalyzes two of the four reactions of the long chain fatty acids peroxisomal beta-oxidation pathway. Can also use branched-chain fatty acids such as 2-methyl-2E-butenoyl-CoA as a substrate, which is hydrated into (2S,3S)-3-hydroxy-2-methylbutanoyl-CoA. Optimal isomerase for 2,5 double bonds into 3,5 form isomerization in a range of enoyl-CoA species. Also able to isomerize both 3-cis and 3-trans double bonds into the 2-trans form in a range of enoyl-CoA species. Regulates the amount of medium-chain dicarboxylic fatty acids which are essential regulators of all fatty acid oxidation pathways. Also involved in the degradation of long-chain dicarboxylic acids through peroxisomal beta-oxidation. The chain is Peroxisomal bifunctional enzyme from Rattus norvegicus (Rat).